The following is a 521-amino-acid chain: MKVSSLLSVALPGAALAATDSFQSRCNEFQNKIDIANVTVRSVAYVAAGQNISQAEVASVCKASVQASVDLCRVTMNISTSDRSHLWAEAWLPRNYTGRFVSTGNGGLAGCVQETDLNFAANFGFATVGTNGGHDGDTAKYFLNNSEVLADFAYRSVHEGTVVGKQLTQLFYDEGYNYSYYLGCSTGGRQGYQQVQRFPDDYDGVIAGSAAMNFINLISWGAFLWKATGLADDPDFISADLWSVIHQEIVRQCDLVDGALDGIIEDPDFCAPVIERLICDGTTNGTSCITGAQAAKVNRALSDFYGPDGTVYYPRLNYGGEADSAYLYFTGSMYSRTEEWYKYVVYNDTNWNSSQWTLESAKLALEQNPFNIQAFDPNITAFRDRGGKLLSYHGTQDPIISSTDSKLYYRRVANALNAAPSELDEFYRFFQISGMGHCGDGTGASYIGQGYGTYTSKAPQVNLLRTMVDWVENGKAPEYMPGNKLNANGSIEYMRKHCRYPKHNVHTGPGNYTDPNSWTCV.

Positions 1–17 (MKVSSLLSVALPGAALA) are cleaved as a signal peptide. Intrachain disulfides connect C26–C72 and C61–C111. N37, N51, N77, N95, N144, and N177 each carry an N-linked (GlcNAc...) asparagine glycan. 3 disulfide bridges follow: C184–C438, C253–C270, and C279–C288. S185 acts as the Acyl-ester intermediate in catalysis. Positions 254, 257, 259, 261, and 263 each coordinate Ca(2+). N-linked (GlcNAc...) asparagine glycans are attached at residues N284, N347, N352, and N378. Residues D397 and H437 each act as charge relay system in the active site. N488 and N511 each carry an N-linked (GlcNAc...) asparagine glycan. The cysteines at positions 498 and 520 are disulfide-linked.

It belongs to the tannase family.

Its subcellular location is the secreted. It catalyses the reaction feruloyl-polysaccharide + H2O = ferulate + polysaccharide.. Functionally, involved in degradation of plant cell walls. Hydrolyzes the feruloyl-arabinose ester bond in arabinoxylans as well as the feruloyl-galactose and feruloyl-arabinose ester bonds in pectin. The polypeptide is Probable feruloyl esterase B (faeB) (Aspergillus niger (strain ATCC MYA-4892 / CBS 513.88 / FGSC A1513)).